The sequence spans 298 residues: Bifunctional protein FolD (298 aa).

Residues 166–168 (GRS), Ser191, and Ile232 contribute to the NADP(+) site.

The protein belongs to the tetrahydrofolate dehydrogenase/cyclohydrolase family. In terms of assembly, homodimer.

It catalyses the reaction (6R)-5,10-methylene-5,6,7,8-tetrahydrofolate + NADP(+) = (6R)-5,10-methenyltetrahydrofolate + NADPH. It carries out the reaction (6R)-5,10-methenyltetrahydrofolate + H2O = (6R)-10-formyltetrahydrofolate + H(+). The protein operates within one-carbon metabolism; tetrahydrofolate interconversion. Catalyzes the oxidation of 5,10-methylenetetrahydrofolate to 5,10-methenyltetrahydrofolate and then the hydrolysis of 5,10-methenyltetrahydrofolate to 10-formyltetrahydrofolate. This is Bifunctional protein FolD from Erythrobacter litoralis (strain HTCC2594).